A 105-amino-acid chain; its full sequence is Met repressor (105 aa).

The protein belongs to the MetJ family. Homodimer.

The protein resides in the cytoplasm. Its function is as follows. This regulatory protein, when combined with SAM (S-adenosylmethionine) represses the expression of the methionine regulon and of enzymes involved in SAM synthesis. In Photorhabdus laumondii subsp. laumondii (strain DSM 15139 / CIP 105565 / TT01) (Photorhabdus luminescens subsp. laumondii), this protein is Met repressor.